A 710-amino-acid chain; its full sequence is Chloride channel protein CLC-e (710 aa).

12 helical membrane-spanning segments follow: residues 74-94 (ELAI…VVLF), 122-142 (IGSN…VVSI), 164-184 (VKAV…LGTG), 193-213 (SVEI…KSPQ), 222-242 (GSAA…FFAV), 261-281 (TTSM…IGLG), 296-316 (PGEL…SLAL), 340-360 (VFPV…PEVL), 379-399 (GLSA…TAWC), 412-432 (SLFI…LALA), 451-471 (GLVG…TAVL), and 472-492 (LLFE…AVGM). The tract at residues 500-534 (QSKRQETRETKETRKRKSQEAVQSLTSSDDESSTN) is disordered. Residues 502–511 (KRQETRETKE) are compositionally biased toward basic and acidic residues. Residues 520 to 534 (AVQSLTSSDDESSTN) show a composition bias toward polar residues. CBS domains follow at residues 565 to 624 (MRTR…GNNR) and 640 to 702 (KCKV…ATRM). The chain crosses the membrane as a helical span at residues 667 to 687 (HVAVVSGSIDAPRIHPVGVLD).

Belongs to the chloride channel (TC 2.A.49) family. As to quaternary structure, homodimer.

The protein localises to the membrane. The enzyme catalyses 2 chloride(in) + H(+)(out) = 2 chloride(out) + H(+)(in). Its function is as follows. Voltage-gated thylakoid chloride (Cl) channel/transporter involved in chloride homeostasis after transition from light to dark. Influences chloroplast ultrastructure and subsequent photosynthetic electron transport. During photosynthetic response on transition from dark to low light, involved in a sequential mechanism of adaptation; VCCN1 and CLCe first trigger the activation of photoprotection, which is later down-regulated by KEA3 to a low steady state, while adjusting electron transport. Regulates photosynthesis by a pH-independent mechanism likely involving Cl(-) homeostasis. This chain is Chloride channel protein CLC-e, found in Arabidopsis thaliana (Mouse-ear cress).